Reading from the N-terminus, the 555-residue chain is Disabled homolog 1 (555 aa).

Residues 1–26 (MSTETELQVAVKTSAKKDSRKKGQDR) form a disordered region. The segment covering 15 to 26 (AKKDSRKKGQDR) has biased composition (basic and acidic residues). The 154-residue stretch at 36-189 (KGEGVRYKAK…CEQAVYQTIL (154 aa)) folds into the PID domain. Residues tyrosine 198, tyrosine 220, and tyrosine 232 each carry the phosphotyrosine modification. Disordered regions lie at residues 384 to 410 (LTPL…RQKM), 418 to 437 (FQMA…PSLT), and 468 to 555 (NLTP…QAGS). Polar residues predominate over residues 391 to 403 (PGTSDSTRPSPQT). Composition is skewed to low complexity over residues 470–479 (TPVTSTTPST) and 487–501 (PRQS…SHAS). Serine 491 bears the Phosphoserine; by CDK5 mark. The span at 504–513 (TTDDIFEEGF) shows a compositional bias: acidic residues.

As to quaternary structure, associates with the SH2 domains of SRC, FYN and ABL. Interacts (phosphorylated on tyrosine residues) with CRK and CRKL (via respective SH2 domain). Interacts with DAB2IP, SIAH1, LRP8 and VLDLR. Interacts with LRP1. Interacts with APLP1 (via NPXY motif). Interacts with DAB2IP. Interacts with ZSWIM8. Post-translationally, phosphorylated by FYN on Tyr-198 and Tyr-220 upon reelin induction in embryonic neurons. Also phosphorylated on Ser-491 independently of reelin signaling. In terms of processing, ubiquitinated by various cullin-5-RING E3 ubiquitin-protein ligase complexes (ECS complexes) following ligand-binding and phosphorylation, leading to its degradation. Ubiquitinated by the ECS(SOCS7) complex in the cortical plate of the developing cerebral cortex following ligand-binding and phosphorylation by FYN, leading to its degradation by the proteasome. Recognized by ZSWIM8 through a disorder targets misorder mechanism that eliminates misfolded DAB1 via ubiquitination and proteasomal degradation.

The protein resides in the cytoplasm. Functionally, signaling adapter of the reelin-mediated signaling pathway, which regulates the migration and differentiation of postmitotic neurons during brain development. Mediates intracellular transduction of Reelin signaling following reelin (RELN)-binding to its receptor: acts by docking proteins through its phosphotyrosine residues and PID domain. This Macaca fascicularis (Crab-eating macaque) protein is Disabled homolog 1 (DAB1).